Reading from the N-terminus, the 270-residue chain is Tetraspanin-14 (270 aa).

Topologically, residues 1–17 are cytoplasmic; that stretch reads MHYYRYSNAKVSCWYKY. Residues 18-38 traverse the membrane as a helical segment; that stretch reads LLFSYNIIFWLAGVVFLGVGL. The Extracellular portion of the chain corresponds to 39–61; sequence WAWSEKGVLSDLTKVTRMHGIDP. Residues 62–82 traverse the membrane as a helical segment; the sequence is VVLVLMVGVVMFTLGFAGCVG. At 83–92 the chain is on the cytoplasmic side; the sequence is ALRENICLLN. Residues 93-113 traverse the membrane as a helical segment; the sequence is FFCGTIVLIFFLELAVAVLAF. The Extracellular portion of the chain corresponds to 114–232; sequence LFQDWVRDRF…QALESWLPRN (119 aa). Positions 114–232 are necessary and sufficient for interaction with ADAM10; sequence LFQDWVRDRF…QALESWLPRN (119 aa). 4 disulfide bridges follow: Cys153/Cys221, Cys154/Cys186, Cys170/Cys180, and Cys187/Cys200. Residue Asn169 is glycosylated (N-linked (GlcNAc...) asparagine). Residues 233 to 253 traverse the membrane as a helical segment; the sequence is IYIVAGVFIAISLLQIFGIFL. The Cytoplasmic portion of the chain corresponds to 254 to 270; it reads ARTLISDIEAVKAGHHF.

Belongs to the tetraspanin (TM4SF) family. Interacts with ADAM10; the interaction promotes ADAM10 maturation and cell surface expression.

The protein resides in the cell membrane. Functionally, part of TspanC8 subgroup, composed of 6 members that interact with the transmembrane metalloprotease ADAM10. This interaction is required for ADAM10 exit from the endoplasmic reticulum and for enzymatic maturation and trafficking to the cell surface as well as substrate specificity. Different TspanC8/ADAM10 complexes have distinct substrates. Negatively regulates ADAM10-mediated cleavage of GP6. Promotes ADAM10-mediated cleavage of CDH5. In Homo sapiens (Human), this protein is Tetraspanin-14.